The primary structure comprises 60 residues: Large ribosomal subunit protein bL32 (60 aa).

Basic residues predominate over residues Met-1–His-20. The segment at Met-1–Asp-60 is disordered. Positions Ile-28–Leu-44 are enriched in basic and acidic residues.

The protein belongs to the bacterial ribosomal protein bL32 family.

In Caulobacter vibrioides (strain ATCC 19089 / CIP 103742 / CB 15) (Caulobacter crescentus), this protein is Large ribosomal subunit protein bL32.